The primary structure comprises 427 residues: Glutamate-1-semialdehyde 2,1-aminomutase (427 aa).

K265 carries the post-translational modification N6-(pyridoxal phosphate)lysine.

The protein belongs to the class-III pyridoxal-phosphate-dependent aminotransferase family. HemL subfamily. In terms of assembly, homodimer. It depends on pyridoxal 5'-phosphate as a cofactor.

The protein localises to the cytoplasm. The enzyme catalyses (S)-4-amino-5-oxopentanoate = 5-aminolevulinate. Its pathway is porphyrin-containing compound metabolism; protoporphyrin-IX biosynthesis; 5-aminolevulinate from L-glutamyl-tRNA(Glu): step 2/2. In Burkholderia vietnamiensis (strain G4 / LMG 22486) (Burkholderia cepacia (strain R1808)), this protein is Glutamate-1-semialdehyde 2,1-aminomutase.